The following is a 120-amino-acid chain: MITKVDRNAVRKKRHARIRKKIFGTTERPRLSVFRSNKHIYAQIIDDTKSATIVSASTLDKEFGLDSTNNIEAAKKVGELVAKRALEKGIKQVVFDRGGYLYHGRVKALADAAREAGLEF.

The protein belongs to the universal ribosomal protein uL18 family. Part of the 50S ribosomal subunit; part of the 5S rRNA/L5/L18 subcomplex. In B.stearothermophilus only 2 proteins, L5 and L18 have been shown to be part of this subcomplex, unlike the case in E.coli and T.thermophilus where L25 (TL5) is also found. Post-translationally, the protein, when overexpressed in E.coli, contains a phosphoserine, which is required for the protein to bind to 5S rRNA. It has been suggested, based solely on amino acid conservation, that this occurs on Ser-57.

This is one of the proteins that bind and probably mediate the attachment of the 5S RNA into the large ribosomal subunit, where it forms part of the central protuberance. This Geobacillus stearothermophilus (Bacillus stearothermophilus) protein is Large ribosomal subunit protein uL18 (rplR).